Consider the following 166-residue polypeptide: Protein adg1 (166 aa).

The first 22 residues, 1 to 22, serve as a signal peptide directing secretion; that stretch reads MFLRSIFQTLCAVSFLAGSVFA.

It localises to the endoplasmic reticulum. In Schizosaccharomyces pombe (strain 972 / ATCC 24843) (Fission yeast), this protein is Protein adg1 (adg1).